We begin with the raw amino-acid sequence, 172 residues long: UPF0316 protein Clos_0555 (172 aa).

A run of 3 helical transmembrane segments spans residues 3-23, 34-54, and 61-81; these read ALLG…MATI, VIAA…IGKV, and PLNV…GIFL.

It belongs to the UPF0316 family.

Its subcellular location is the cell membrane. The sequence is that of UPF0316 protein Clos_0555 from Alkaliphilus oremlandii (strain OhILAs) (Clostridium oremlandii (strain OhILAs)).